A 508-amino-acid polypeptide reads, in one-letter code: Histidine ammonia-lyase (508 aa).

Positions 143-145 (ASG) form a cross-link, 5-imidazolinone (Ala-Gly). Ser-144 carries the post-translational modification 2,3-didehydroalanine (Ser).

The protein belongs to the PAL/histidase family. Contains an active site 4-methylidene-imidazol-5-one (MIO), which is formed autocatalytically by cyclization and dehydration of residues Ala-Ser-Gly.

It localises to the cytoplasm. It catalyses the reaction L-histidine = trans-urocanate + NH4(+). It participates in amino-acid degradation; L-histidine degradation into L-glutamate; N-formimidoyl-L-glutamate from L-histidine: step 1/3. This Anaeromyxobacter dehalogenans (strain 2CP-C) protein is Histidine ammonia-lyase.